Reading from the N-terminus, the 116-residue chain is Large ribosomal subunit protein bL19 (116 aa).

Belongs to the bacterial ribosomal protein bL19 family.

Its function is as follows. This protein is located at the 30S-50S ribosomal subunit interface and may play a role in the structure and function of the aminoacyl-tRNA binding site. This is Large ribosomal subunit protein bL19 (rplS) from Geobacillus stearothermophilus (Bacillus stearothermophilus).